A 222-amino-acid polypeptide reads, in one-letter code: 7-cyano-7-deazaguanine synthase (222 aa).

Residue 8–18 (LSGGLDSATCL) coordinates ATP. The Zn(2+) site is built by Cys-187, Cys-197, Cys-200, and Cys-203.

Belongs to the QueC family. Zn(2+) is required as a cofactor.

It catalyses the reaction 7-carboxy-7-deazaguanine + NH4(+) + ATP = 7-cyano-7-deazaguanine + ADP + phosphate + H2O + H(+). It participates in purine metabolism; 7-cyano-7-deazaguanine biosynthesis. Functionally, catalyzes the ATP-dependent conversion of 7-carboxy-7-deazaguanine (CDG) to 7-cyano-7-deazaguanine (preQ(0)). This is 7-cyano-7-deazaguanine synthase from Alcanivorax borkumensis (strain ATCC 700651 / DSM 11573 / NCIMB 13689 / SK2).